The sequence spans 235 residues: Uridylate kinase (235 aa).

9–12 is a binding site for ATP; it reads KISG. Gly50 contacts UMP. 2 residues coordinate ATP: Gly51 and Arg55. UMP contacts are provided by residues Asp70 and 131–138; that span reads TGFPYFTT. Residues Asn159, Tyr165, and Asp168 each contribute to the ATP site.

Belongs to the UMP kinase family. Homohexamer; trimer of dimers.

It is found in the cytoplasm. It catalyses the reaction UMP + ATP = UDP + ADP. The protein operates within pyrimidine metabolism; CTP biosynthesis via de novo pathway; UDP from UMP (UMPK route): step 1/1. With respect to regulation, unlike other bacteria, is not activated by GTP. UTP is a competitive inhibitor against UMP and a non-competitive inhibitor toward ATP. Catalyzes the reversible phosphorylation of UMP to UDP, with ATP as the most efficient phosphate donor. Is also able to phosphorylate dUMP. The protein is Uridylate kinase (pyrH) of Ureaplasma parvum serovar 3 (strain ATCC 700970).